The primary structure comprises 393 residues: Anhydro-N-acetylmuramic acid kinase (393 aa).

Residue 9-16 (GTSADGVD) coordinates ATP.

The protein belongs to the anhydro-N-acetylmuramic acid kinase family.

It catalyses the reaction 1,6-anhydro-N-acetyl-beta-muramate + ATP + H2O = N-acetyl-D-muramate 6-phosphate + ADP + H(+). It participates in amino-sugar metabolism; 1,6-anhydro-N-acetylmuramate degradation. It functions in the pathway cell wall biogenesis; peptidoglycan recycling. Functionally, catalyzes the specific phosphorylation of 1,6-anhydro-N-acetylmuramic acid (anhMurNAc) with the simultaneous cleavage of the 1,6-anhydro ring, generating MurNAc-6-P. Is required for the utilization of anhMurNAc either imported from the medium or derived from its own cell wall murein, and thus plays a role in cell wall recycling. This chain is Anhydro-N-acetylmuramic acid kinase, found in Acidithiobacillus ferrooxidans (strain ATCC 23270 / DSM 14882 / CIP 104768 / NCIMB 8455) (Ferrobacillus ferrooxidans (strain ATCC 23270)).